A 280-amino-acid chain; its full sequence is uncharacterized protein (280 aa).

10 N-linked (GlcNAc...) asparagine; by host glycosylation sites follow: Asn75, Asn98, Asn107, Asn143, Asn158, Asn170, Asn192, Asn207, Asn224, and Asn230. The helical transmembrane segment at Ala235–Val255 threads the bilayer.

It belongs to the RL11 family.

The protein resides in the host membrane. This is an uncharacterized protein from Human cytomegalovirus (strain Merlin) (HHV-5).